A 99-amino-acid polypeptide reads, in one-letter code: Integration host factor subunit alpha (99 aa).

Belongs to the bacterial histone-like protein family. Heterodimer of an alpha and a beta chain.

Functionally, this protein is one of the two subunits of integration host factor, a specific DNA-binding protein that functions in genetic recombination as well as in transcriptional and translational control. This Pseudoalteromonas translucida (strain TAC 125) protein is Integration host factor subunit alpha.